Consider the following 426-residue polypeptide: Mediator of RNA polymerase II transcription subunit 1 (426 aa).

The interval 324–356 is disordered; it reads VGDAPAPAAQPPLHRRRSSNKGCRRASAAESAT. Residues 336-347 show a composition bias toward basic residues; sequence LHRRRSSNKGCR.

This sequence belongs to the Mediator complex subunit 1 family. As to quaternary structure, component of the Mediator complex.

It localises to the nucleus. In terms of biological role, component of the Mediator complex, a coactivator involved in the regulated transcription of nearly all RNA polymerase II-dependent genes. Mediator functions as a bridge to convey information from gene-specific regulatory proteins to the basal RNA polymerase II transcription machinery. Mediator is recruited to promoters by direct interactions with regulatory proteins and serves as a scaffold for the assembly of a functional preinitiation complex with RNA polymerase II and the general transcription factors. The polypeptide is Mediator of RNA polymerase II transcription subunit 1 (MED1) (Eremothecium gossypii (strain ATCC 10895 / CBS 109.51 / FGSC 9923 / NRRL Y-1056) (Yeast)).